Consider the following 321-residue polypeptide: MAEAALAGQLPDAQSGLRLLTDPGIELLPLLQAAFRVRFHHFGRGVRIHILNNVQNGYCSEDCNYCAQAKNSKAPIEKYSIKSDEEILEGARKAYESGAYRYCMVSSGRSPHAERIDHMSKLIREIKSRWPVEVCLSAGFLDANKARELKEAGLDRYNHNLNTADGYYGSICTTHSYGDRLNTLQEARRAGLEVCSGIIIGMGEKPEEIVEVATTLRSLQARSIPVNFYVHVEGAQLGAVDQLTPAYALRALALFRFFNPDAEVRAAGGRESNLRGMESMALYPANSLFAEGYLNTTGHMAEKTVKMVEDAGFFVEKIEEE.

Residues 44 to 270 (RGVRIHILNN…DAEVRAAGGR (227 aa)) enclose the Radical SAM core domain. Positions 59, 63, and 66 each coordinate [4Fe-4S] cluster. Residues cysteine 103, cysteine 135, cysteine 195, and arginine 265 each coordinate [2Fe-2S] cluster.

Belongs to the radical SAM superfamily. Biotin synthase family. As to quaternary structure, homodimer. [4Fe-4S] cluster is required as a cofactor. Requires [2Fe-2S] cluster as cofactor.

It carries out the reaction (4R,5S)-dethiobiotin + (sulfur carrier)-SH + 2 reduced [2Fe-2S]-[ferredoxin] + 2 S-adenosyl-L-methionine = (sulfur carrier)-H + biotin + 2 5'-deoxyadenosine + 2 L-methionine + 2 oxidized [2Fe-2S]-[ferredoxin]. The protein operates within cofactor biosynthesis; biotin biosynthesis; biotin from 7,8-diaminononanoate: step 2/2. In terms of biological role, catalyzes the conversion of dethiobiotin (DTB) to biotin by the insertion of a sulfur atom into dethiobiotin via a radical-based mechanism. The sequence is that of Biotin synthase from Magnetococcus marinus (strain ATCC BAA-1437 / JCM 17883 / MC-1).